Here is a 246-residue protein sequence, read N- to C-terminus: Major prion protein (246 aa).

Positions 1-15 (MLVVFVATWSDLGLC) are cleaved as a signal peptide. The interaction with GRB2, ERI3 and SYN1 stretch occupies residues 16–223 (KKRPKPGGWN…ESQAYYQRGS (208 aa)). Positions 18–100 (RPKPGGWNTG…QWHKPSKPKT (83 aa)) are disordered. Repeat copies occupy residues 44-52 (PQGGGGWGQ), 53-60 (PHGGGWGQ), 61-68 (PHGGGWGQ), 69-76 (PHGGGWGQ), and 77-84 (PHGGGWGQ). Positions 44–84 (PQGGGGWGQPHGGGWGQPHGGGWGQPHGGGWGQPHGGGWGQ) are 5 X 8 AA tandem repeats of P-H-G-G-G-W-G-Q. Positions 45–88 (QGGGGWGQPHGGGWGQPHGGGWGQPHGGGWGQPHGGGWGQGGGT) are enriched in gly residues. H54, G55, G56, H62, G63, G64, H70, G71, G72, H78, G79, and G80 together coordinate Cu(2+). Over residues 91–100 (QWHKPSKPKT) the composition is skewed to basic residues. C172 and C207 form a disulfide bridge. N-linked (GlcNAc...) asparagine glycans are attached at residues N174 and N190. Residue S223 is the site of GPI-anchor amidated serine attachment. Residues 224 to 246 (SMVLFSSPPVILLISFLIFLIVG) constitute a propeptide, removed in mature form.

It belongs to the prion family. In terms of assembly, monomer and homodimer. Has a tendency to aggregate into amyloid fibrils containing a cross-beta spine, formed by a steric zipper of superposed beta-strands. Soluble oligomers may represent an intermediate stage on the path to fibril formation. Copper binding may promote oligomerization. Interacts with GRB2, APP, ERI3/PRNPIP and SYN1. Mislocalized cytosolically exposed PrP interacts with MGRN1; this interaction alters MGRN1 subcellular location and causes lysosomal enlargement. Interacts with KIAA1191.

It localises to the cell membrane. Its subcellular location is the golgi apparatus. Functionally, its primary physiological function is unclear. Has cytoprotective activity against internal or environmental stresses. May play a role in neuronal development and synaptic plasticity. May be required for neuronal myelin sheath maintenance. May play a role in iron uptake and iron homeostasis. Soluble oligomers are toxic to cultured neuroblastoma cells and induce apoptosis (in vitro). Association with GPC1 (via its heparan sulfate chains) targets PRNP to lipid rafts. Also provides Cu(2+) or Zn(2+) for the ascorbate-mediated GPC1 deaminase degradation of its heparan sulfate side chains. This Erythrocebus patas (Red guenon) protein is Major prion protein (PRNP).